We begin with the raw amino-acid sequence, 245 residues long: Ribosomal RNA small subunit methyltransferase G (245 aa).

S-adenosyl-L-methionine-binding positions include glycine 80, phenylalanine 85, 103 to 105 (DAT), 131 to 132 (AE), and arginine 150.

This sequence belongs to the methyltransferase superfamily. RNA methyltransferase RsmG family.

It localises to the cytoplasm. Functionally, specifically methylates the N7 position of a guanine in 16S rRNA. The sequence is that of Ribosomal RNA small subunit methyltransferase G from Deinococcus geothermalis (strain DSM 11300 / CIP 105573 / AG-3a).